The primary structure comprises 311 residues: HPr kinase/phosphorylase (311 aa).

Active-site residues include His138 and Lys159. 153-160 (GDSGIGKS) contacts ATP. Ser160 contributes to the Mg(2+) binding site. Catalysis depends on Asp177, which acts as the Proton acceptor; for phosphorylation activity. Proton donor; for dephosphorylation activity. Positions 201–210 (LEIRGVGIID) are important for the catalytic mechanism of both phosphorylation and dephosphorylation. Glu202 is a Mg(2+) binding site. The active site involves Arg243. Positions 264–269 (PVKTGR) are important for the catalytic mechanism of dephosphorylation.

This sequence belongs to the HPrK/P family. In terms of assembly, homohexamer. The cofactor is Mg(2+).

The catalysed reaction is [HPr protein]-L-serine + ATP = [HPr protein]-O-phospho-L-serine + ADP + H(+). The enzyme catalyses [HPr protein]-O-phospho-L-serine + phosphate + H(+) = [HPr protein]-L-serine + diphosphate. Catalyzes the ATP- as well as the pyrophosphate-dependent phosphorylation of a specific serine residue in HPr, a phosphocarrier protein of the phosphoenolpyruvate-dependent sugar phosphotransferase system (PTS). HprK/P also catalyzes the pyrophosphate-producing, inorganic phosphate-dependent dephosphorylation (phosphorolysis) of seryl-phosphorylated HPr (P-Ser-HPr). The two antagonistic activities of HprK/P are regulated by several intracellular metabolites, which change their concentration in response to the absence or presence of rapidly metabolisable carbon sources (glucose, fructose, etc.) in the growth medium. Therefore, by controlling the phosphorylation state of HPr, HPrK/P is a sensor enzyme that plays a major role in the regulation of carbon metabolism and sugar transport: it mediates carbon catabolite repression (CCR), and regulates PTS-catalyzed carbohydrate uptake and inducer exclusion. This chain is HPr kinase/phosphorylase, found in Streptococcus agalactiae serotype Ia (strain ATCC 27591 / A909 / CDC SS700).